The chain runs to 330 residues: tRNA(Ile)-lysidine synthase (330 aa).

31-36 (SGGQDS) provides a ligand contact to ATP.

It belongs to the tRNA(Ile)-lysidine synthase family.

The protein resides in the cytoplasm. It catalyses the reaction cytidine(34) in tRNA(Ile2) + L-lysine + ATP = lysidine(34) in tRNA(Ile2) + AMP + diphosphate + H(+). Functionally, ligates lysine onto the cytidine present at position 34 of the AUA codon-specific tRNA(Ile) that contains the anticodon CAU, in an ATP-dependent manner. Cytidine is converted to lysidine, thus changing the amino acid specificity of the tRNA from methionine to isoleucine. The chain is tRNA(Ile)-lysidine synthase from Synechocystis sp. (strain ATCC 27184 / PCC 6803 / Kazusa).